Here is a 765-residue protein sequence, read N- to C-terminus: MRIDVESQNINVTSLKEAPIHLSGQIQPHGVLLVLEEPGLKILQVSNNTWGILGINAENILQKKLEDLLDSFQIERIQSGLSSGNLEFINPTKIWIRKKGDDYAVFDAVFHRNTEGFLILELEPAITQENIPFLSFYHLAKASINQLQKTANLRDFCQIIVQEVRKVTDFDRVMLYKFDDDGHGSVIAEEKLDSLEPYLGLHYPESDIPKPARKLFISNSIRVIPNAQAQAIQMIPALNPVSDRPVDLTNSILRSAANCHLEYLHNMGVGASLTISLIKDNKLWGLIACHHLSAKYVSYELRKACEFLGRVIFAEISAREETEDYDYRMNLTHIQSLLVEYMSQEDNFVDGLIKHQPSLLDLTSAQGAAVCFGDHCTLIGETPKAEDLVFLVQWLKNNVEEEVFYTDSLPQVYPDAERYKNVASGLLAIPISQRNYVLWFRPEVIQTVNWGGDPNQPFEVNKLDGNVRLCPRKSFELWKETVRLTSLPWRYVEIRAALELRKAIVNIVLRQADELAQLAHDLERSNAELKKFAYVASHDLQEPLNQVANYVQLLEMRYQDQLDADANEFITFAVEGVSLMQTLIDDVLAYSKVDTQAIAFQLTEVEKALDKALGNLRQRIAETGANITHDPLPTVMAGSTQLMQLFQNLIANAIKFRSEEAPQIHIGAERLEDEWLFSVRDNGIGIDPQFSDRIFVIFQRLHTRDEYHGTGMGLAICKKIIECHRGRIWVESQLGEGATFYFTIPVGGRERERRNGRKTQNNLFS.

A chromophore binding domain region spans residues I20–R510. One can recognise a GAF domain in the interval N152–E320. Position 259 (C259) interacts with a tetrapyrrole. Residues V535–G748 form the Histidine kinase domain. H538 carries the post-translational modification Phosphohistidine; by autocatalysis.

In the N-terminal section; belongs to the phytochrome family. Contains one covalently linked tetrapyrrole chromophore.

The enzyme catalyses ATP + protein L-histidine = ADP + protein N-phospho-L-histidine.. Photoreceptor which exists in two forms that are reversibly interconvertible by light: the R form that absorbs maximally in the red region of the spectrum and the FR form that absorbs maximally in the far-red region. The sequence is that of Cyanobacterial phytochrome A (aphA) from Nostoc sp. (strain PCC 7120 / SAG 25.82 / UTEX 2576).